The primary structure comprises 357 residues: SNF1-related protein kinase regulatory subunit gamma-like PV42b (357 aa).

4 consecutive CBS domains span residues 16–97, 113–185, 198–273, and 293–351; these read MIDK…DGES, HCPE…SSQL, AIHN…WLPL, and STPG…ALLS.

It belongs to the 5'-AMP-activated protein kinase gamma subunit family. In terms of tissue distribution, expressed highly in rosette leaves, cauline leaves, open flowers, developing siliques and dry seeds, but at a low level in stems and floral buds.

Its function is as follows. Plays redundant role with PV42a in regulating male gametogenesis and pollen tube guidance. This Arabidopsis thaliana (Mouse-ear cress) protein is SNF1-related protein kinase regulatory subunit gamma-like PV42b (PV42B).